Reading from the N-terminus, the 143-residue chain is Ribonuclease P protein component 2 (143 aa).

This sequence belongs to the eukaryotic/archaeal RNase P protein component 2 family. As to quaternary structure, consists of a catalytic RNA component and at least 4-5 protein subunits.

The protein localises to the cytoplasm. It carries out the reaction Endonucleolytic cleavage of RNA, removing 5'-extranucleotides from tRNA precursor.. In terms of biological role, part of ribonuclease P, a protein complex that generates mature tRNA molecules by cleaving their 5'-ends. The polypeptide is Ribonuclease P protein component 2 (Saccharolobus islandicus (strain L.S.2.15 / Lassen #1) (Sulfolobus islandicus)).